The chain runs to 30 residues: NADH-ubiquinone oxidoreductase chain 5 (30 aa).

The helical transmembrane segment at 7–27 (NIIIIINSSLIIILFSSIFFF) threads the bilayer.

The protein belongs to the complex I subunit 5 family.

Its subcellular location is the mitochondrion inner membrane. It carries out the reaction a ubiquinone + NADH + 5 H(+)(in) = a ubiquinol + NAD(+) + 4 H(+)(out). Functionally, core subunit of the mitochondrial membrane respiratory chain NADH dehydrogenase (Complex I) that is believed to belong to the minimal assembly required for catalysis. Complex I functions in the transfer of electrons from NADH to the respiratory chain. The immediate electron acceptor for the enzyme is believed to be ubiquinone. This is NADH-ubiquinone oxidoreductase chain 5 (ND5) from Pisaster ochraceus (Ochre sea star).